A 153-amino-acid chain; its full sequence is uncharacterized protein (153 aa).

This is an uncharacterized protein from Allochromatium vinosum (strain ATCC 17899 / DSM 180 / NBRC 103801 / NCIMB 10441 / D) (Chromatium vinosum).